A 419-amino-acid polypeptide reads, in one-letter code: GTPase Obg (419 aa).

The 158-residue stretch at 1 to 158 folds into the Obg domain; that stretch reads MIFIDTAEII…RRLRLELKLV (158 aa). One can recognise an OBG-type G domain in the interval 159-328; that stretch reads AHVGLVGLPN…LVDVLFELIS (170 aa). GTP is bound by residues 165 to 172, 190 to 194, 211 to 214, 281 to 284, and 309 to 311; these read GLPNAGKS, FTTRS, DVPG, NKID, and SAA. Mg(2+) is bound by residues serine 172 and threonine 192. Residues 344–419 form the OCT domain; it reads ELPPLPEDFS…VIHDKAFEIL (76 aa).

This sequence belongs to the TRAFAC class OBG-HflX-like GTPase superfamily. OBG GTPase family. Monomer. Mg(2+) is required as a cofactor.

Its subcellular location is the cytoplasm. In terms of biological role, an essential GTPase which binds GTP, GDP and possibly (p)ppGpp with moderate affinity, with high nucleotide exchange rates and a fairly low GTP hydrolysis rate. Plays a role in control of the cell cycle, stress response, ribosome biogenesis and in those bacteria that undergo differentiation, in morphogenesis control. This Coprothermobacter proteolyticus (strain ATCC 35245 / DSM 5265 / OCM 4 / BT) protein is GTPase Obg.